Consider the following 488-residue polypeptide: Probable indole-3-acetic acid-amido synthetase GH3.6 (488 aa).

The protein belongs to the IAA-amido conjugating enzyme family. As to expression, expressed in roots and callus.

In terms of biological role, may catalyze the synthesis of indole-3-acetic acid (IAA)-amino acid conjugates, providing a mechanism for the plant to cope with the presence of excess auxin. The protein is Probable indole-3-acetic acid-amido synthetase GH3.6 (GH3.6) of Oryza sativa subsp. japonica (Rice).